The primary structure comprises 331 residues: Small ribosomal subunit protein uS2 (331 aa).

Belongs to the universal ribosomal protein uS2 family.

The protein is Small ribosomal subunit protein uS2 of Rhodopseudomonas palustris (strain HaA2).